Here is a 202-residue protein sequence, read N- to C-terminus: Small ribosomal subunit protein uS2 (202 aa).

The protein belongs to the universal ribosomal protein uS2 family.

This chain is Small ribosomal subunit protein uS2 (rps2), found in Pyrococcus abyssi (strain GE5 / Orsay).